The sequence spans 502 residues: Lysine--tRNA ligase (502 aa).

2 residues coordinate Mg(2+): Glu-398 and Glu-405.

The protein belongs to the class-II aminoacyl-tRNA synthetase family. As to quaternary structure, homodimer. The cofactor is Mg(2+).

The protein localises to the cytoplasm. It catalyses the reaction tRNA(Lys) + L-lysine + ATP = L-lysyl-tRNA(Lys) + AMP + diphosphate. This chain is Lysine--tRNA ligase (lysS), found in Thermotoga maritima (strain ATCC 43589 / DSM 3109 / JCM 10099 / NBRC 100826 / MSB8).